The following is a 193-amino-acid chain: Peptidyl-tRNA hydrolase (193 aa).

H17 provides a ligand contact to tRNA. H22 acts as the Proton acceptor in catalysis. TRNA is bound by residues F68, N70, and N116.

It belongs to the PTH family. As to quaternary structure, monomer.

Its subcellular location is the cytoplasm. It carries out the reaction an N-acyl-L-alpha-aminoacyl-tRNA + H2O = an N-acyl-L-amino acid + a tRNA + H(+). Its function is as follows. Hydrolyzes ribosome-free peptidyl-tRNAs (with 1 or more amino acids incorporated), which drop off the ribosome during protein synthesis, or as a result of ribosome stalling. Functionally, catalyzes the release of premature peptidyl moieties from peptidyl-tRNA molecules trapped in stalled 50S ribosomal subunits, and thus maintains levels of free tRNAs and 50S ribosomes. This chain is Peptidyl-tRNA hydrolase, found in Xanthomonas euvesicatoria pv. vesicatoria (strain 85-10) (Xanthomonas campestris pv. vesicatoria).